The primary structure comprises 286 residues: Homoserine kinase (286 aa).

78–88 (PVAHGLGSSSS) is a binding site for ATP.

This sequence belongs to the GHMP kinase family. Homoserine kinase subfamily.

The protein resides in the cytoplasm. It carries out the reaction L-homoserine + ATP = O-phospho-L-homoserine + ADP + H(+). It participates in amino-acid biosynthesis; L-threonine biosynthesis; L-threonine from L-aspartate: step 4/5. In terms of biological role, catalyzes the ATP-dependent phosphorylation of L-homoserine to L-homoserine phosphate. This chain is Homoserine kinase, found in Limosilactobacillus fermentum (strain NBRC 3956 / LMG 18251) (Lactobacillus fermentum).